Here is a 590-residue protein sequence, read N- to C-terminus: Ovarian abundant message protein (590 aa).

The segment at 1–71 is disordered; the sequence is MQGTDNAPPG…SPGQPLVEEQ (71 aa). The segment covering 18–29 has biased composition (basic residues); the sequence is SPRRIRHVRRHY. 27 tandem repeats follow at residues 66–71, 72–77, 78–83, 84–89, 90–95, 96–101, 102–107, 108–113, 114–119, 120–125, 126–131, 132–137, 138–143, 144–149, 150–155, 156–161, 162–167, 168–173, 174–179, 180–185, 300–305, 306–311, 312–317, 318–323, 324–329, 330–335, and 336–341. The segment at 66–185 is 20 X 6 AA tandem repeats of P-[LP]-V-[EG]-[EG]-[QR]; that stretch reads PLVEEQPLVE…VEGQPLVEGQ (120 aa). The 8 X 6 AA approximate tandem repeats of P-L-A-[GV]-[AV]-[PL] stretch occupies residues 300-347; the sequence is PLAGAPPLAGVPPLAVALPLAGAPPLAGVPPLAGAPPLAGALPRAGVL. One copy of the 2-8; approximate repeat lies at 342–347; the sequence is PRAGVL. 16 repeat units span residues 348-353, 354-359, 360-365, 366-371, 372-377, 378-383, 384-389, 390-395, 396-401, 402-407, 408-413, 419-424, 425-430, 431-436, 437-442, and 443-448. Residues 348–413 are 11 X 6 AA tandem repeats of approximate R-R-A-[GD]-V-[LV]; the sequence is RRAGVLRRAG…ADVLRRADVV (66 aa). Residues 419–454 form a 6 X 6 AA approximate tandem repeats of Q-[QR]-L-A-D-V region; it reads QQLADVQRLADVQRLADVQRLADVQRLADVQRLVCV. Residues 449 to 454 form a 4-6; approximate repeat; it reads QRLVCV.

In terms of tissue distribution, somatic ovarian tissue.

This is Ovarian abundant message protein (OAM) from Ascaris suum (Pig roundworm).